The primary structure comprises 595 residues: MSQQTTASSEYLDESKTFSSFQLDLRLQQSLKSSGFHHPTLIQSSAIPLALEQKRDIIAKASTGSGKTLAYLIPVVQTILEHKSTQGADRTTGTLGVVLVPTRELAQQVRVVLEKLVLYCSKDIRLLNISANVDDSVLGPLLAENPEIIISTPSQLVKILEGKHLQTISLRDLRFLVIDEVDLILTFGYQEDLLKISQYLPLKKNLQAFLMSATLNEEIQELKTKFCRSPAILKLNDDEINKNKNKLLQYYVKVSEFDKFLLCYVIFKLSLIKGKTIIFVNTIDRGYRLKLVLEQFGIRSCILNSELPLNSRQHIVDEFNKNVYQLLIATDDNEYIEEEDEETVEAGEEGSEKLEEGGEKLEEITSKTSSTNGKQKIAKKDKEYGASRGVDFQNVSCVLNFDLPTTAKSYVHRIGRTARAGKSGTAISFVVPLKEYGKHKPSMLVTAKKDEKILARVIKQQSKLGFQIEPYNFDVKQIEGFRYRMEDGFRAVTQVAVREARVKELKQELLASEKLKRHFEENPHDLDSLRHDKELHPARVQQHLKRVPDYLLPEAARETGKKIGFVPFHNPKKNRKGKVAKRKPGRKSDPLKNFK.

The Q motif motif lies at 16-44 (KTFSSFQLDLRLQQSLKSSGFHHPTLIQS). One can recognise a Helicase ATP-binding domain in the interval 48–233 (PLALEQKRDI…TKFCRSPAIL (186 aa)). 61–68 (ASTGSGKT) is an ATP binding site. The short motif at 179–182 (DEVD) is the DEAD box element. The region spanning 246–479 (KLLQYYVKVS…PYNFDVKQIE (234 aa)) is the Helicase C-terminal domain. Residues 340–349 (DEETVEAGEE) show a composition bias toward acidic residues. Disordered regions lie at residues 340-376 (DEET…GKQK) and 562-595 (KIGF…KNFK). The span at 350–365 (GSEKLEEGGEKLEEIT) shows a compositional bias: basic and acidic residues. Over residues 570–585 (NPKKNRKGKVAKRKPG) the composition is skewed to basic residues. Basic and acidic residues predominate over residues 586 to 595 (RKSDPLKNFK).

This sequence belongs to the DEAD box helicase family. DDX56/DBP9 subfamily.

The protein resides in the nucleus. The protein localises to the nucleolus. The catalysed reaction is ATP + H2O = ADP + phosphate + H(+). Its function is as follows. ATP-binding RNA helicase involved in the biogenesis of 60S ribosomal subunits and is required for the normal formation of 25S and 5.8S rRNAs. In Eremothecium gossypii (strain ATCC 10895 / CBS 109.51 / FGSC 9923 / NRRL Y-1056) (Yeast), this protein is ATP-dependent RNA helicase DBP9 (DBP9).